Here is a 216-residue protein sequence, read N- to C-terminus: MISVEHVSKRYLTRQGWRTVLHDISFKMEKGEKIGILGRNGAGKSTLIRLISGVEPPTTGEIKRTMSISWPLAFSGAFQGSLTGMDNLRFICRIYNVDIDYVKAFTEEFSELGQYLYEPVKRYSSGMKARLAFALSLAVEFDCYLIDEVIAVGDSRFADKCKYELFEKRKDRSIILVSHSHSAMKQYCDNAMVLEKGHMYQFEDMDKAYEYYNSLP.

An ABC transporter domain is found at 2–215 (ISVEHVSKRY…DKAYEYYNSL (214 aa)). 38-45 (GRNGAGKS) is an ATP binding site.

It belongs to the ABC transporter superfamily.

Its subcellular location is the cell inner membrane. It catalyses the reaction ATP + H2O + capsular polysaccharide-[capsular polysaccharide-binding protein]Side 1 = ADP + phosphate + capsular polysaccharideSide 2 + [capsular polysaccharide-binding protein]Side 1.. Functionally, putative ATP-binding protein, and an energy-coupling component of capsule polysaccharide export apparatus. This Neisseria meningitidis serogroup B (strain ATCC BAA-335 / MC58) protein is Capsule polysaccharide export ATP-binding protein CtrD (ctrD).